Here is a 367-residue protein sequence, read N- to C-terminus: Pectate lyase 1 (367 aa).

An N-terminal signal peptide occupies residues 1-21 (MASPCLIAVLVFLCAIVSCYS). A disulfide bridge connects residues cysteine 28 and cysteine 45. A beta-helix region spans residues 38–305 (NRMKLADCAV…YKKEVTKRIG (268 aa)). Residues 92 to 104 (IFSQNMNIKLKMP) form an igE-binding. Binds to IgE in 5 out of 7 patients tested region. Cysteine 128 and cysteine 147 are oxidised to a cystine. A glycan (N-linked (GlcNAc...) asparagine) is linked at asparagine 148. Aspartate 170 is a binding site for Ca(2+). The N-linked (GlcNAc...) asparagine glycan is linked to asparagine 178. The Ca(2+) site is built by aspartate 194 and aspartate 198. An igE-binding. Binds to IgE in 6 out of 7 patients tested region spans residues 239–250 (AFNQFGPNAGQR). Arginine 250 is a catalytic residue. Residues 251–258 (MPRARYGL) form an igE-binding. Binds to IgE in 5 out of 7 patients tested region. Cysteine 306 and cysteine 312 are oxidised to a cystine. Residues 317 to 327 (WRSTRDAFING) form an igE-binding. Binds to IgE in 3 out of 7 patients tested region.

The protein belongs to the polysaccharide lyase 1 family. Amb a subfamily. It depends on Ca(2+) as a cofactor. In terms of processing, N-glycosylated; consists of complex-type N-glycans containing the Lewis a antigen (Galbeta1-3(Fucalpha1-4)GlcNAcbeta1-). In terms of tissue distribution, expressed in pollen (at protein level).

It catalyses the reaction Eliminative cleavage of (1-&gt;4)-alpha-D-galacturonan to give oligosaccharides with 4-deoxy-alpha-D-galact-4-enuronosyl groups at their non-reducing ends.. It functions in the pathway glycan metabolism; pectin degradation; 2-dehydro-3-deoxy-D-gluconate from pectin: step 2/5. Has low pectate lyase activity. The sequence is that of Pectate lyase 1 from Juniperus ashei (Ozark white cedar).